The following is a 252-amino-acid chain: uncharacterized protein (252 aa).

9–33 contributes to the NADP(+) binding site; it reads LITGGSAGIGLELAKRLLELGNEVI. Ser139 provides a ligand contact to substrate. Catalysis depends on Tyr152, which acts as the Proton acceptor.

Belongs to the short-chain dehydrogenases/reductases (SDR) family.

It is found in the cytoplasm. This is an uncharacterized protein from Bacillus subtilis (strain 168).